The following is a 382-amino-acid chain: 3-isopropylmalate dehydrogenase (382 aa).

NAD(+) is bound at residue 91–102 (GPKWGTGSVRPE). Arg-109, Arg-119, Arg-148, and Asp-240 together coordinate substrate. Positions 240, 265, and 269 each coordinate Mg(2+). 304 to 315 (GSAPDLTENKVN) lines the NAD(+) pocket.

Belongs to the isocitrate and isopropylmalate dehydrogenases family. As to quaternary structure, homodimer. Mg(2+) is required as a cofactor. Mn(2+) serves as cofactor.

The protein localises to the cytoplasm. The catalysed reaction is (2R,3S)-3-isopropylmalate + NAD(+) = 4-methyl-2-oxopentanoate + CO2 + NADH. Its pathway is amino-acid biosynthesis; L-leucine biosynthesis; L-leucine from 3-methyl-2-oxobutanoate: step 3/4. Catalyzes the oxidation of 3-carboxy-2-hydroxy-4-methylpentanoate (3-isopropylmalate) to 3-carboxy-4-methyl-2-oxopentanoate. The product decarboxylates to 4-methyl-2 oxopentanoate. The protein is 3-isopropylmalate dehydrogenase (LEU2) of Debaryomyces hansenii (strain ATCC 36239 / CBS 767 / BCRC 21394 / JCM 1990 / NBRC 0083 / IGC 2968) (Yeast).